A 599-amino-acid polypeptide reads, in one-letter code: Sulfite reductase [NADPH] flavoprotein alpha-component (599 aa).

The 139-residue stretch at 64–202 (ITIISASQTG…AASEWRARVV (139 aa)) folds into the Flavodoxin-like domain. Residues 70–75 (SQTGNA), 117–120 (STQG), and 153–162 (LGDSSYEFFC) each bind FMN. One can recognise an FAD-binding FR-type domain in the interval 234–448 (DAPLVASLSV…IEHNDNFRLP (215 aa)). Residues Thr322, Ala356, 386 to 389 (RLYS), 404 to 406 (TVG), Tyr410, and 419 to 422 (GGAS) each bind FAD. NADP(+)-binding positions include 519–520 (SR), 525–529 (KVYVQ), and Asp561. FAD is bound at residue Tyr599.

It belongs to the NADPH-dependent sulphite reductase flavoprotein subunit CysJ family. The protein in the N-terminal section; belongs to the flavodoxin family. This sequence in the C-terminal section; belongs to the flavoprotein pyridine nucleotide cytochrome reductase family. In terms of assembly, alpha(8)-beta(8). The alpha component is a flavoprotein, the beta component is a hemoprotein. Requires FAD as cofactor. FMN is required as a cofactor.

It catalyses the reaction hydrogen sulfide + 3 NADP(+) + 3 H2O = sulfite + 3 NADPH + 4 H(+). It functions in the pathway sulfur metabolism; hydrogen sulfide biosynthesis; hydrogen sulfide from sulfite (NADPH route): step 1/1. Component of the sulfite reductase complex that catalyzes the 6-electron reduction of sulfite to sulfide. This is one of several activities required for the biosynthesis of L-cysteine from sulfate. The flavoprotein component catalyzes the electron flow from NADPH -&gt; FAD -&gt; FMN to the hemoprotein component. The chain is Sulfite reductase [NADPH] flavoprotein alpha-component from Shigella boydii serotype 4 (strain Sb227).